The following is a 257-amino-acid chain: DNA repair protein RecO (257 aa).

The protein belongs to the RecO family.

Involved in DNA repair and RecF pathway recombination. This Variovorax paradoxus (strain S110) protein is DNA repair protein RecO.